We begin with the raw amino-acid sequence, 212 residues long: Lysozyme g-like protein 2 (212 aa).

Positions 1–19 are cleaved as a signal peptide; sequence MLSSVVFWGLIALIGTSRG. Intrachain disulfides connect Cys39/Cys92 and Cys53/Cys61. Glu105 is a catalytic residue.

This sequence belongs to the glycosyl hydrolase 23 family. In terms of tissue distribution, strong expression detected in the eye and weak expression in the testis. No expression is observed in any other tissues.

It localises to the secreted. Functionally, may act as a potent antibacterial protein that may play a role in the innate immunity. This is Lysozyme g-like protein 2 (LYG2) from Homo sapiens (Human).